An 811-amino-acid polypeptide reads, in one-letter code: Ent-13-epi-manoyl oxide synthase KSL2, chloroplastic (811 aa).

Residues 1-49 constitute a chloroplast transit peptide; sequence MALPLSTCLLFHPKESRSRRFCFSPASAASLKSGLHSATSAKIASMPTC. Positions 550, 554, 694, and 702 each coordinate Mg(2+). The DDXXD motif motif lies at 550-554; the sequence is DDFFD.

This sequence belongs to the terpene synthase family. Requires Mg(2+) as cofactor.

The protein resides in the plastid. It localises to the chloroplast. It catalyses the reaction ent-8alpha-hydroxylabd-13-en-15-yl diphosphate = ent-13-epi-manoyl oxide + diphosphate. The protein operates within secondary metabolite biosynthesis; terpenoid biosynthesis. Involved in diterpenoid biosynthesis. Catalyzes the conversion of ent-8alpha-hydroxylabd-13-en-15-yl diphosphate to ent-13-epi-manoyl oxide. The sequence is that of Ent-13-epi-manoyl oxide synthase KSL2, chloroplastic from Salvia miltiorrhiza (Chinese sage).